Reading from the N-terminus, the 260-residue chain is Hydroxyethylthiazole kinase 1 (260 aa).

Methionine 39 provides a ligand contact to substrate. Residues arginine 115 and threonine 160 each contribute to the ATP site. Position 187 (glycine 187) interacts with substrate.

Belongs to the Thz kinase family. Mg(2+) is required as a cofactor.

The enzyme catalyses 5-(2-hydroxyethyl)-4-methylthiazole + ATP = 4-methyl-5-(2-phosphooxyethyl)-thiazole + ADP + H(+). It participates in cofactor biosynthesis; thiamine diphosphate biosynthesis; 4-methyl-5-(2-phosphoethyl)-thiazole from 5-(2-hydroxyethyl)-4-methylthiazole: step 1/1. In terms of biological role, catalyzes the phosphorylation of the hydroxyl group of 4-methyl-5-beta-hydroxyethylthiazole (THZ). The chain is Hydroxyethylthiazole kinase 1 from Streptococcus pneumoniae (strain Taiwan19F-14).